An 880-amino-acid chain; its full sequence is Alanine--tRNA ligase (880 aa).

4 residues coordinate Zn(2+): His-548, His-552, Cys-651, and His-655.

This sequence belongs to the class-II aminoacyl-tRNA synthetase family. Zn(2+) serves as cofactor.

It localises to the cytoplasm. The catalysed reaction is tRNA(Ala) + L-alanine + ATP = L-alanyl-tRNA(Ala) + AMP + diphosphate. Catalyzes the attachment of alanine to tRNA(Ala) in a two-step reaction: alanine is first activated by ATP to form Ala-AMP and then transferred to the acceptor end of tRNA(Ala). Also edits incorrectly charged Ser-tRNA(Ala) and Gly-tRNA(Ala) via its editing domain. This is Alanine--tRNA ligase from Tropheryma whipplei (strain TW08/27) (Whipple's bacillus).